The primary structure comprises 550 residues: uncharacterized protein (550 aa).

The first 53 residues, M1–R53, serve as a signal peptide directing secretion. N296 and N518 each carry an N-linked (GlcNAc...) asparagine glycan.

It localises to the endoplasmic reticulum. This is an uncharacterized protein from Schizosaccharomyces pombe (strain 972 / ATCC 24843) (Fission yeast).